Here is a 157-residue protein sequence, read N- to C-terminus: Endoribonuclease YbeY (157 aa).

His114, His118, and His124 together coordinate Zn(2+).

Belongs to the endoribonuclease YbeY family. It depends on Zn(2+) as a cofactor.

The protein localises to the cytoplasm. Its function is as follows. Single strand-specific metallo-endoribonuclease involved in late-stage 70S ribosome quality control and in maturation of the 3' terminus of the 16S rRNA. The sequence is that of Endoribonuclease YbeY from Caulobacter vibrioides (strain ATCC 19089 / CIP 103742 / CB 15) (Caulobacter crescentus).